The chain runs to 712 residues: Cyclomaltodextrin glucanotransferase (712 aa).

A signal peptide spans 1–27 (MKRFMKLTAVWTLWLSLTLGLLSPVHA). The interval 28–165 (APDTSVSNKQ…NIKVIIDFAP (138 aa)) is A1. Aspartate 54, asparagine 56, asparagine 59, and asparagine 60 together coordinate Ca(2+). Cysteine 70 and cysteine 77 are joined by a disulfide. Ca(2+) contacts are provided by glycine 78 and aspartate 80. Residue 127–128 (YW) participates in substrate binding. Asparagine 166 is a binding site for Ca(2+). The interval 166-229 (NHTSPASSDD…NLYDLADLNH (64 aa)) is b. Residue histidine 167 participates in substrate binding. Isoleucine 217 serves as a coordination point for Ca(2+). 220-223 (NLYD) contacts substrate. Aspartate 226 is a Ca(2+) binding site. Positions 230 to 433 (NNSSVDVYLK…LRKSNPAIAY (204 aa)) are A2. Substrate is bound at residue arginine 254. Aspartate 256 (nucleophile) is an active-site residue. Residue 259-260 (KH) participates in substrate binding. Histidine 260 lines the Ca(2+) pocket. Glutamate 284 acts as the Proton donor in catalysis. The substrate site is built by histidine 354, aspartate 398, and arginine 402. Residues 434-522 (GSTQERWINN…GTAVWQYTTD (89 aa)) are c. Residues 523-608 (ATAPINGNVG…SNIYDNFEVL (86 aa)) are d. In terms of domain architecture, IPT/TIG spans 526–606 (PINGNVGPMM…AASNIYDNFE (81 aa)). The CBM20 domain maps to 607–712 (VLTGDQVTVR…TATVNVNWQP (106 aa)). An e region spans residues 609 to 712 (TGDQVTVRFV…TATVNVNWQP (104 aa)).

Belongs to the glycosyl hydrolase 13 family. As to quaternary structure, monomer. It depends on Ca(2+) as a cofactor.

The protein localises to the secreted. It carries out the reaction Cyclizes part of a (1-&gt;4)-alpha-D-glucan chain by formation of a (1-&gt;4)-alpha-D-glucosidic bond.. This chain is Cyclomaltodextrin glucanotransferase (cgt), found in Bacillus sp. (strain 38-2).